The chain runs to 520 residues: Probable E3 ubiquitin-protein ligase XBOS33 (520 aa).

ANK repeat units follow at residues 44 to 73 (GLNS…DVNV), 77 to 106 (CGQT…NVTR), 111 to 140 (SGRT…PSAP), 185 to 214 (GGVT…NVSA), and 228 to 258 (AGST…KLTL). Residues 327-377 (CAVCLERSCSVAAEGCCHEFCIKCALYLCSTSNTRVEFTGPPGSIPCPLCR) form an RING-type zinc finger. Polar residues predominate over residues 467–479 (QDGSEVQSPQPSH). The tract at residues 467–493 (QDGSEVQSPQPSHCASMEMDKREQQDL) is disordered. The segment covering 484–493 (EMDKREQQDL) has biased composition (basic and acidic residues).

It catalyses the reaction S-ubiquitinyl-[E2 ubiquitin-conjugating enzyme]-L-cysteine + [acceptor protein]-L-lysine = [E2 ubiquitin-conjugating enzyme]-L-cysteine + N(6)-ubiquitinyl-[acceptor protein]-L-lysine.. The protein operates within protein modification; protein ubiquitination. The protein is Probable E3 ubiquitin-protein ligase XBOS33 (XBOS33) of Oryza sativa subsp. japonica (Rice).